We begin with the raw amino-acid sequence, 66 residues long: Small ribosomal subunit protein bS21 (66 aa).

The protein belongs to the bacterial ribosomal protein bS21 family.

The sequence is that of Small ribosomal subunit protein bS21 from Bdellovibrio bacteriovorus (strain ATCC 15356 / DSM 50701 / NCIMB 9529 / HD100).